The following is a 102-amino-acid chain: MAKQKIRIRLKAFDHTILDQSSEKIVETAKSTGAKVAGPVPLPTEKDVVTILRAPHKYKDSREQFEIRTHKRLIDIISPSPKTVDALMRLDLPAGVDIEIKL.

Belongs to the universal ribosomal protein uS10 family. In terms of assembly, part of the 30S ribosomal subunit.

Its function is as follows. Involved in the binding of tRNA to the ribosomes. The sequence is that of Small ribosomal subunit protein uS10 from Clostridium kluyveri (strain NBRC 12016).